A 991-amino-acid chain; its full sequence is Regulator of telomere elongation helicase 1 homolog (991 aa).

Residues 7–319 enclose the Helicase ATP-binding domain; it reads NGIPVNFPFE…DDLVLLKEIL (313 aa). Residue 42–49 coordinates ATP; it reads SPTGTGKT. Cysteine 148, cysteine 166, cysteine 175, and cysteine 211 together coordinate [4Fe-4S] cluster. A DEAH box motif is present at residues 254 to 257; that stretch reads DEAH. A disordered region spans residues 812–833; sequence SMKVNPHSRSTKSAGDDAEAGG.

Belongs to the helicase family. RAD3/XPD subfamily.

The protein localises to the nucleus. The enzyme catalyses ATP + H2O = ADP + phosphate + H(+). In terms of biological role, a probable ATP-dependent DNA helicase implicated in DNA repair and the maintenance of genomic stability. Acts as an anti-recombinase to counteract toxic recombination and limit crossover during meiosis. Regulates meiotic recombination and crossover homeostasis by physically dissociating strand invasion events and thereby promotes noncrossover repair by meiotic synthesis dependent strand annealing (SDSA) as well as disassembly of D loop recombination intermediates. This is Regulator of telomere elongation helicase 1 homolog from Anopheles gambiae (African malaria mosquito).